Reading from the N-terminus, the 436-residue chain is MSEIQPKTEVPPKTVEEEEESDDEEDNTKVTEGGNPTGGEGAAKKKKKKNKKKKKAAPVASAADIIDSKPIPSGLVQTNPPTIPVSKQFSNGVYPMGEIQEYRDSNSYRTTSEEKRLEERIHANIYNDVRRAAEVHRQVRKYVQGIVKPGLGLTELVESLENASRTLIEADGLKAGIAFPTGVSLNHIAAHFTPNTGDKTVLKKDDVLKIDFGTHVNGYIIDCAFTVTFDEKYDKLKDAVREATNTGIYHAGIDARLGEIGAAIQEVMESHEIELNGKTYPIRSIRNLNGHSIRPYVIHGGKTVPIVRGGEMTKMEEGEFYAIETFGSTGRAQVIEDLECSHYMKTDYQTTVRLPKAKQLLQYINKNYDTLCFCRRWLDRAGEDKHILALNNLCDLGIIQRHAPLVDSKGSYVAQYEHTLLLKPTAKEVLSRGDDY.

The disordered stretch occupies residues 1–61 (MSEIQPKTEV…KKKKAAPVAS (61 aa)). The segment covering 16 to 26 (EEEEESDDEED) has biased composition (acidic residues). Basic residues predominate over residues 44-56 (KKKKKKNKKKKKA). H191 contributes to the substrate binding site. D211, D222, and H291 together coordinate a divalent metal cation. H299 provides a ligand contact to substrate. 2 residues coordinate a divalent metal cation: E324 and E417.

It belongs to the peptidase M24A family. Methionine aminopeptidase eukaryotic type 2 subfamily. Requires Co(2+) as cofactor. It depends on Zn(2+) as a cofactor. The cofactor is Mn(2+). Fe(2+) serves as cofactor.

Its subcellular location is the cytoplasm. It catalyses the reaction Release of N-terminal amino acids, preferentially methionine, from peptides and arylamides.. Its function is as follows. Cotranslationally removes the N-terminal methionine from nascent proteins. The N-terminal methionine is often cleaved when the second residue in the primary sequence is small and uncharged (Met-Ala-, Cys, Gly, Pro, Ser, Thr, or Val). The sequence is that of Methionine aminopeptidase 2 (metap2) from Dictyostelium discoideum (Social amoeba).